A 62-amino-acid chain; its full sequence is uncharacterized protein (62 aa).

A disordered region spans residues 17 to 62; it reads YNNYNNNNNNNNNNNNNNNNNNNNNNNNNNNNNNNNNNNNNNKNNN.

This is an uncharacterized protein from Dictyostelium discoideum (Social amoeba).